The primary structure comprises 832 residues: Protein P (832 aa).

The terminal protein domain (TP) stretch occupies residues M1 to Q177. Positions E178–L335 are spacer. Positions R241–S263 are disordered. Polar residues predominate over residues S251–S263. Residues E336–Q679 form a polymerase/reverse transcriptase domain (RT) region. A Reverse transcriptase domain is found at E346–I589. Mg(2+) is bound by residues D418, D540, and D541.

It belongs to the hepadnaviridae P protein family.

The catalysed reaction is DNA(n) + a 2'-deoxyribonucleoside 5'-triphosphate = DNA(n+1) + diphosphate. The enzyme catalyses Endonucleolytic cleavage to 5'-phosphomonoester.. Its activity is regulated as follows. Activated by host HSP70 and HSP40 in vitro to be able to bind the epsilon loop of the pgRNA. Because deletion of the RNase H region renders the protein partly chaperone-independent, the chaperones may be needed indirectly to relieve occlusion of the RNA-binding site by this domain. Inhibited by several reverse-transcriptase inhibitors: Lamivudine, Adefovir and Entecavir. In terms of biological role, multifunctional enzyme that converts the viral RNA genome into dsDNA in viral cytoplasmic capsids. This enzyme displays a DNA polymerase activity that can copy either DNA or RNA templates, and a ribonuclease H (RNase H) activity that cleaves the RNA strand of RNA-DNA heteroduplexes in a partially processive 3'- to 5'-endonucleasic mode. Neo-synthesized pregenomic RNA (pgRNA) are encapsidated together with the P protein, and reverse-transcribed inside the nucleocapsid. Initiation of reverse-transcription occurs first by binding the epsilon loop on the pgRNA genome, and is initiated by protein priming, thereby the 5'-end of (-)DNA is covalently linked to P protein. Partial (+)DNA is synthesized from the (-)DNA template and generates the relaxed circular DNA (RC-DNA) genome. After budding and infection, the RC-DNA migrates in the nucleus, and is converted into a plasmid-like covalently closed circular DNA (cccDNA). The activity of P protein does not seem to be necessary for cccDNA generation, and is presumably released from (+)DNA by host nuclear DNA repair machinery. This chain is Protein P, found in Homo sapiens (Human).